The primary structure comprises 255 residues: Myogenic factor 5 (255 aa).

One can recognise a bHLH domain in the interval 83-134; that stretch reads DRRKAATMRERRRLKKVNQAFDTLKRCTTTNPNQRLPKVEILRNAIRYIESL. The disordered stretch occupies residues 217-249; that stretch reads SEQPGLPLQDPASLSPVASTDSQPATPGASSSR. Over residues 232–249 the composition is skewed to polar residues; the sequence is PVASTDSQPATPGASSSR.

Efficient DNA binding requires dimerization with another bHLH protein.

The protein localises to the nucleus. Its function is as follows. Acts as a transcriptional activator that promotes transcription of muscle-specific target genes and plays a role in muscle differentiation. Together with MYOG and MYOD1, co-occupies muscle-specific gene promoter core region during myogenesis. Induces fibroblasts to differentiate into myoblasts. Probable sequence specific DNA-binding protein. This chain is Myogenic factor 5 (MYF5), found in Bos taurus (Bovine).